The sequence spans 117 residues: Modulator protein MzrA (117 aa).

At 1 to 11 the chain is on the cytoplasmic side; the sequence is MMTNRRFRKPS. The chain crosses the membrane as a helical span at residues 12–29; it reads AWRLLLLLLPLVVLLSMS. Topologically, residues 30-117 are periplasmic; sequence SRRLPDEVML…SNGTSPVTRS (88 aa).

This sequence belongs to the MzrA family. Interacts with EnvZ.

It is found in the cell inner membrane. Functionally, modulates the activity of the EnvZ/OmpR two-component regulatory system, probably by directly modulating EnvZ enzymatic activity and increasing stability of phosphorylated OmpR. The protein is Modulator protein MzrA of Dickeya dadantii (strain 3937) (Erwinia chrysanthemi (strain 3937)).